The sequence spans 171 residues: Co-chaperone protein HscB (171 aa).

Positions 2 to 74 constitute a J domain; the sequence is DYFTFFGLPA…LMRAEYLLSL (73 aa).

It belongs to the HscB family. Interacts with HscA and stimulates its ATPase activity. Interacts with IscU.

Co-chaperone involved in the maturation of iron-sulfur cluster-containing proteins. Seems to help targeting proteins to be folded toward HscA. This chain is Co-chaperone protein HscB, found in Shigella sonnei (strain Ss046).